Reading from the N-terminus, the 312-residue chain is Homoserine kinase (312 aa).

Residue 94–104 participates in ATP binding; that stretch reads PLGRGLGSSAA.

Belongs to the GHMP kinase family. Homoserine kinase subfamily.

The protein localises to the cytoplasm. It carries out the reaction L-homoserine + ATP = O-phospho-L-homoserine + ADP + H(+). It participates in amino-acid biosynthesis; L-threonine biosynthesis; L-threonine from L-aspartate: step 4/5. Functionally, catalyzes the ATP-dependent phosphorylation of L-homoserine to L-homoserine phosphate. This Caldanaerobacter subterraneus subsp. tengcongensis (strain DSM 15242 / JCM 11007 / NBRC 100824 / MB4) (Thermoanaerobacter tengcongensis) protein is Homoserine kinase.